The chain runs to 130 residues: Large ribosomal subunit protein bL12 (130 aa).

The protein belongs to the bacterial ribosomal protein bL12 family. As to quaternary structure, homodimer. Part of the ribosomal stalk of the 50S ribosomal subunit. Forms a multimeric L10(L12)X complex, where L10 forms an elongated spine to which 2 to 4 L12 dimers bind in a sequential fashion. Binds GTP-bound translation factors.

Its function is as follows. Forms part of the ribosomal stalk which helps the ribosome interact with GTP-bound translation factors. Is thus essential for accurate translation. The chain is Large ribosomal subunit protein bL12 from Chlamydia trachomatis serovar L2 (strain ATCC VR-902B / DSM 19102 / 434/Bu).